The primary structure comprises 460 residues: T-box transcription factor TBX1 (460 aa).

2 disordered regions span residues 30–53 (LNTP…ESQF) and 67–99 (GSNS…TLVK). Residues 67–84 (GSNSAQAPAQGDSGTSNC) are compositionally biased toward polar residues. A DNA-binding region (T-box) is located at residues 116–294 (LWDEFNQLGT…SNPFAKGFRD (179 aa)). Disordered stretches follow at residues 317–355 (RTRN…DPTH) and 376–400 (PLTA…PDTL). The segment covering 320–330 (NPMSSPPQQNG) has biased composition (polar residues). A compositionally biased stretch (basic and acidic residues) spans 331–344 (TEKEDSRREYDRDP). The Nuclear localization signal motif lies at 418 to 429 (KTRPSPYPSPSI).

As to quaternary structure, binds DNA as a dimer. Expressed in the ear and mesendodermal components of pharyngeal arches.

Its subcellular location is the nucleus. Its function is as follows. Probable transcriptional regulator involved in developmental processes. Binds to the palindromic T site 5'-TTCACACCTAGGTGTGAA-3' DNA sequence. Is required for normal development of the pharyngeal arch arteries. Acts cell autonomously in the pharyngeal mesendoderm and influences the development of neural crest-derived cartilages secondarily. This is T-box transcription factor TBX1 (tbx1) from Danio rerio (Zebrafish).